Reading from the N-terminus, the 230-residue chain is Demethylmenaquinone methyltransferase (230 aa).

Residues threonine 62, aspartate 80, 100 to 101 (DG), and serine 117 each bind S-adenosyl-L-methionine.

This sequence belongs to the class I-like SAM-binding methyltransferase superfamily. MenG/UbiE family.

It catalyses the reaction a 2-demethylmenaquinol + S-adenosyl-L-methionine = a menaquinol + S-adenosyl-L-homocysteine + H(+). It functions in the pathway quinol/quinone metabolism; menaquinone biosynthesis; menaquinol from 1,4-dihydroxy-2-naphthoate: step 2/2. Methyltransferase required for the conversion of demethylmenaquinol (DMKH2) to menaquinol (MKH2). The chain is Demethylmenaquinone methyltransferase from Corynebacterium glutamicum (strain R).